The chain runs to 166 residues: uncharacterized protein (166 aa).

3 helical membrane-spanning segments follow: residues Leu4 to Ile24, Leu101 to Ile121, and Ser146 to Leu166.

Its subcellular location is the membrane. This is an uncharacterized protein from Saccharomyces cerevisiae (strain ATCC 204508 / S288c) (Baker's yeast).